Here is a 686-residue protein sequence, read N- to C-terminus: DNA ligase (686 aa).

Residues 34–38 (DAEYD), 83–84 (SI), and Glu-120 each bind NAD(+). Lys-122 serves as the catalytic N6-AMP-lysine intermediate. The NAD(+) site is built by Arg-143, Glu-180, Lys-298, and Lys-322. 4 residues coordinate Zn(2+): Cys-420, Cys-423, Cys-438, and Cys-444. Residues 603–686 (QSGGILSGKT…ALLGSNKKNG (84 aa)) enclose the BRCT domain.

The protein belongs to the NAD-dependent DNA ligase family. LigA subfamily. Requires Mg(2+) as cofactor. Mn(2+) serves as cofactor.

The enzyme catalyses NAD(+) + (deoxyribonucleotide)n-3'-hydroxyl + 5'-phospho-(deoxyribonucleotide)m = (deoxyribonucleotide)n+m + AMP + beta-nicotinamide D-nucleotide.. Functionally, DNA ligase that catalyzes the formation of phosphodiester linkages between 5'-phosphoryl and 3'-hydroxyl groups in double-stranded DNA using NAD as a coenzyme and as the energy source for the reaction. It is essential for DNA replication and repair of damaged DNA. The chain is DNA ligase from Thiobacillus denitrificans (strain ATCC 25259 / T1).